The sequence spans 443 residues: MNFLVIGLSHKTAPVELRERISFSSDDPGGVLRAITALPGISEGMILSTCNRVEVYAASGDPAGGCACLQRFMAEHHGLDEAQLKPHLYIHSGRDAIRHLFRVASSLDSMILGEPQILGQLKEAYNLAESSCTAGPVLNRLLPRAFAAAKRVRNETAIAQHAVSVSYAAVELARKIFGDLAGKSVMIVGAGKMCELAARHLTGQNIGEVLVTNRTLARAQSLAEQFGGRAIPFAEFPLYLNQADIVLTSTAAGGLLLTRAQLEQIIRQRKNRPMFLIDIAVPRNIDPEVNHIDNVYLYDIDDLNGVIETNLRERRKAAKKAEDIIEQEIVRFYSWLRSLEATPMIVALRRQVEDIRRTETEKTLGSLQHLDAGDRRAVEALTRAIVNKVLHSPLSVLKRAGDDITGEIYLEAVRRLFDLNPDSQQTGGDSVEKDADSKQDLTS.

Substrate is bound by residues 49–52 (TCNR), serine 109, 114–116 (EPQ), and glutamine 120. Cysteine 50 acts as the Nucleophile in catalysis. Position 189–194 (189–194 (GAGKMC)) interacts with NADP(+). Positions 421–443 (PDSQQTGGDSVEKDADSKQDLTS) are disordered. Basic and acidic residues predominate over residues 430–443 (SVEKDADSKQDLTS).

It belongs to the glutamyl-tRNA reductase family. As to quaternary structure, homodimer.

It catalyses the reaction (S)-4-amino-5-oxopentanoate + tRNA(Glu) + NADP(+) = L-glutamyl-tRNA(Glu) + NADPH + H(+). Its pathway is porphyrin-containing compound metabolism; protoporphyrin-IX biosynthesis; 5-aminolevulinate from L-glutamyl-tRNA(Glu): step 1/2. In terms of biological role, catalyzes the NADPH-dependent reduction of glutamyl-tRNA(Glu) to glutamate 1-semialdehyde (GSA). The sequence is that of Glutamyl-tRNA reductase from Syntrophotalea carbinolica (strain DSM 2380 / NBRC 103641 / GraBd1) (Pelobacter carbinolicus).